The following is a 327-amino-acid chain: Tagatose 1,6-diphosphate aldolase 2 (327 aa).

The protein belongs to the aldolase LacD family.

The catalysed reaction is D-tagatofuranose 1,6-bisphosphate = D-glyceraldehyde 3-phosphate + dihydroxyacetone phosphate. The protein operates within carbohydrate metabolism; D-tagatose 6-phosphate degradation; D-glyceraldehyde 3-phosphate and glycerone phosphate from D-tagatose 6-phosphate: step 2/2. The polypeptide is Tagatose 1,6-diphosphate aldolase 2 (Streptococcus pyogenes serotype M6 (strain ATCC BAA-946 / MGAS10394)).